A 455-amino-acid chain; its full sequence is SUN domain-containing protein 2 (455 aa).

A compositionally biased stretch (polar residues) spans 1 to 12 (MSASTVSITASP). Residues 1 to 99 (MSASTVSITA…RTRKSQGNKI (99 aa)) are disordered. Ser2 bears the N-acetylserine mark. Residues 2–105 (SASTVSITAS…GNKIDRGKWK (104 aa)) are Nuclear-facing. Residue Ser63 is modified to Phosphoserine. Over residues 74 to 88 (KSGSTATGTNTTTTQ) the composition is skewed to low complexity. A Nuclear localization signal motif is present at residues 88–95 (QRRTRKSQ). A helical membrane pass occupies residues 106–128 (TVVRVFAKQFGALLLLVGLIQLI). The Perinuclear space segment spans residues 129-455 (RKLTLKDSSL…ELDSVSVAHA (327 aa)). Positions 201–225 (LHSELKKVESKTERLQVSVDELNAK) form a coiled coil. An SUN domain is found at 285–447 (GGAFVMGHSD…YRFRVHGREL (163 aa)).

As to quaternary structure, forms homomers (e.g. dimers, trimers and tetramers) and heteromers with SUN1. Interacts with SUN3, SUN4 and TIK. Core component of the LINC complex which is composed of inner nuclear membrane SUN domain-containing proteins coupled to outer nuclear membrane WIP and WIT proteins. The LINC complex also involves nucleoskeletal proteins CRWN/LINC and possibly KAKU4 and the cytoskeletal myosin KAKU1. Interacts with LINC1, WIP1, WIP2 and WIP3 at the nuclear envelope (NE). Interacts with SINE1, SINE2, SINE3 and SINE4. Interacts with NEAP1, NEA2 and NEAP3. In terms of tissue distribution, expressed in roots, hypocotyls, cotyledons and leaves and inflorescences.

It localises to the nucleus inner membrane. Its subcellular location is the cytoplasm. The protein localises to the cytoskeleton. The protein resides in the phragmoplast. It is found in the endoplasmic reticulum membrane. It localises to the nucleus envelope. In terms of biological role, component of SUN-protein-containing multivariate complexes also called LINC complexes which link the nucleoskeleton and cytoskeleton by providing versatile outer nuclear membrane attachment sites for cytoskeletal filaments. Required for the maintenance and/or formation of polarized nuclear shape in root hairs. Modulates the anchoring and mobility of WIP proteins in the nuclear envelope (NE). In association with SUN1, may be involved in telomere attachment to nuclear envelope in the prophase of meiosis. As component of the SUN-WIP-WIT2-KAKU1 complex, mediates the transfer of cytoplasmic forces to the nuclear envelope (NE), leading to nuclear shape changes. The chain is SUN domain-containing protein 2 from Arabidopsis thaliana (Mouse-ear cress).